Here is a 464-residue protein sequence, read N- to C-terminus: Glycosyl hydrolase family 109 protein 1 (464 aa).

The N-terminal stretch at 1-16 is a signal peptide; sequence MFKHLNALFIGLALFA. C17 is lipidated: N-palmitoyl cysteine. A lipid anchor (S-diacylglycerol cysteine) is attached at C17. Residues 63–64, D85, 134–137, 154–155, and N183 contribute to the NAD(+) site; these read MR, WKHH, and EV. Substrate contacts are provided by residues Y212, R228, 240 to 243, and Y318; that span reads YATH. Residue Y240 coordinates NAD(+).

It belongs to the Gfo/Idh/MocA family. Glycosyl hydrolase 109 subfamily. NAD(+) is required as a cofactor.

It localises to the cell membrane. Functionally, glycosidase. Has no alpha-N-acetylgalactosaminidase activity. The protein is Glycosyl hydrolase family 109 protein 1 of Bacteroides fragilis (strain ATCC 25285 / DSM 2151 / CCUG 4856 / JCM 11019 / LMG 10263 / NCTC 9343 / Onslow / VPI 2553 / EN-2).